The chain runs to 233 residues: Cilia- and flagella-associated protein 299 (233 aa).

Its subcellular location is the cytoplasm. The protein resides in the nucleus. Its function is as follows. May be involved in spermatogenesis. The sequence is that of Cilia- and flagella-associated protein 299 from Xenopus laevis (African clawed frog).